The chain runs to 74 residues: Exodeoxyribonuclease 7 small subunit (74 aa).

It belongs to the XseB family. As to quaternary structure, heterooligomer composed of large and small subunits.

The protein localises to the cytoplasm. The enzyme catalyses Exonucleolytic cleavage in either 5'- to 3'- or 3'- to 5'-direction to yield nucleoside 5'-phosphates.. Its function is as follows. Bidirectionally degrades single-stranded DNA into large acid-insoluble oligonucleotides, which are then degraded further into small acid-soluble oligonucleotides. The polypeptide is Exodeoxyribonuclease 7 small subunit (Leuconostoc citreum (strain KM20)).